A 360-amino-acid polypeptide reads, in one-letter code: Phenylalanine--tRNA ligase alpha subunit (360 aa).

Residue E260 participates in Mg(2+) binding.

The protein belongs to the class-II aminoacyl-tRNA synthetase family. Phe-tRNA synthetase alpha subunit type 1 subfamily. As to quaternary structure, tetramer of two alpha and two beta subunits. The cofactor is Mg(2+).

Its subcellular location is the cytoplasm. The catalysed reaction is tRNA(Phe) + L-phenylalanine + ATP = L-phenylalanyl-tRNA(Phe) + AMP + diphosphate + H(+). The polypeptide is Phenylalanine--tRNA ligase alpha subunit (Beijerinckia indica subsp. indica (strain ATCC 9039 / DSM 1715 / NCIMB 8712)).